The primary structure comprises 309 residues: Large ribosomal subunit protein mL45 (309 aa).

Belongs to the mitochondrion-specific ribosomal protein mL45 family. As to quaternary structure, component of the mitochondrial ribosome large subunit (39S) which comprises a 16S rRNA and about 50 distinct proteins.

The protein localises to the mitochondrion. Functionally, component of the mitochondrial large ribosomal subunit (mt-LSU). Within the mitochondrial ribosomes, required to direct the nascent polypeptide toward the tunnel exit and position the exit at a distance from the membrane surface. The polypeptide is Large ribosomal subunit protein mL45 (mrpl45) (Xenopus tropicalis (Western clawed frog)).